We begin with the raw amino-acid sequence, 618 residues long: Glutamine--fructose-6-phosphate aminotransferase [isomerizing] (618 aa).

Cysteine 2 (nucleophile; for GATase activity) is an active-site residue. The 225-residue stretch at 2 to 226 (CGIVGYAGRN…DFETAVLTPD (225 aa)) folds into the Glutamine amidotransferase type-2 domain. A disordered region spans residues 72–91 (WATHGRPSTENAHPHNSGGN). SIS domains follow at residues 295–434 (NDDE…VRGK) and 467–608 (CAEN…IDKP). The active-site For Fru-6P isomerization activity is lysine 613.

In terms of assembly, homodimer.

It localises to the cytoplasm. It catalyses the reaction D-fructose 6-phosphate + L-glutamine = D-glucosamine 6-phosphate + L-glutamate. In terms of biological role, catalyzes the first step in hexosamine metabolism, converting fructose-6P into glucosamine-6P using glutamine as a nitrogen source. This chain is Glutamine--fructose-6-phosphate aminotransferase [isomerizing], found in Methanosarcina mazei (strain ATCC BAA-159 / DSM 3647 / Goe1 / Go1 / JCM 11833 / OCM 88) (Methanosarcina frisia).